Consider the following 556-residue polypeptide: Arginine--tRNA ligase (556 aa).

The short motif at A132 to G142 is the 'HIGH' region element.

The protein belongs to the class-I aminoacyl-tRNA synthetase family. As to quaternary structure, monomer.

The protein resides in the cytoplasm. The enzyme catalyses tRNA(Arg) + L-arginine + ATP = L-arginyl-tRNA(Arg) + AMP + diphosphate. This Kocuria rhizophila (strain ATCC 9341 / DSM 348 / NBRC 103217 / DC2201) protein is Arginine--tRNA ligase.